A 39-amino-acid chain; its full sequence is Photosystem II reaction center protein J (39 aa).

The helical transmembrane segment at 9-29 (LWLVGLVGGLAVITMLGLFIY) threads the bilayer.

This sequence belongs to the PsbJ family. In terms of assembly, PSII is composed of 1 copy each of membrane proteins PsbA, PsbB, PsbC, PsbD, PsbE, PsbF, PsbH, PsbI, PsbJ, PsbK, PsbL, PsbM, PsbT, PsbX, PsbY, PsbZ, Psb30/Ycf12, at least 3 peripheral proteins of the oxygen-evolving complex and a large number of cofactors. It forms dimeric complexes.

The protein localises to the plastid. It is found in the chloroplast thylakoid membrane. Functionally, one of the components of the core complex of photosystem II (PSII). PSII is a light-driven water:plastoquinone oxidoreductase that uses light energy to abstract electrons from H(2)O, generating O(2) and a proton gradient subsequently used for ATP formation. It consists of a core antenna complex that captures photons, and an electron transfer chain that converts photonic excitation into a charge separation. This chain is Photosystem II reaction center protein J, found in Phaeodactylum tricornutum (strain CCAP 1055/1).